Reading from the N-terminus, the 589-residue chain is LRR receptor-like serine/threonine-protein kinase FEI 2 (589 aa).

An N-terminal signal peptide occupies residues 1 to 28; the sequence is MGICLMKRCCSWFLLISFLSALTNENEA. Residues 29–236 are Extracellular-facing; the sequence is ISPDGEALLS…TGQGGNNPKR (208 aa). LRR repeat units lie at residues 72–96, 97–120, 122–144, 145–168, and 170–193; these read TKRV…LGKL, DQLR…LGNC, ALEG…IGNL, SGLK…LGQL, and RLTK…LLAR. 2 N-linked (GlcNAc...) asparagine glycosylation sites follow: N119 and N143. N-linked (GlcNAc...) asparagine glycans are attached at residues N175, N215, and N219. Residues 237–257 form a helical membrane-spanning segment; sequence LLISASATVGGLLLVALMCFW. Over 258–589 the chain is Cytoplasmic; it reads GCFLYKKLGR…PSDFYDSSSD (332 aa). In terms of domain architecture, Protein kinase spans 304 to 576; it reads LNEEHIIGCG…VVQLLESEVM (273 aa). ATP is bound by residues 310–318 and K332; that span reads IGCGGFGTV. A Phosphoserine modification is found at S384. D427 functions as the Proton acceptor in the catalytic mechanism. A phosphothreonine mark is found at T460, T461, and T466. Position 474 is a phosphotyrosine (Y474).

Belongs to the protein kinase superfamily. Ser/Thr protein kinase family. Interacts with the ACC synthases ACS5 and ACS9 but not ACS2, via the kinase domain. Post-translationally, autophosphorylated. As to expression, expressed in the root meristem and elongation zone, and in hypocotyls of etiolated seedlings.

Its subcellular location is the cell membrane. It carries out the reaction L-seryl-[protein] + ATP = O-phospho-L-seryl-[protein] + ADP + H(+). The catalysed reaction is L-threonyl-[protein] + ATP = O-phospho-L-threonyl-[protein] + ADP + H(+). Involved in the signaling pathway that regulates cell wall function, including cellulose biosynthesis, likely via an 1-aminocyclopropane-1-carboxylic acid (ACC)-mediated signal (a precursor of ethylene). The protein is LRR receptor-like serine/threonine-protein kinase FEI 2 (FEI2) of Arabidopsis thaliana (Mouse-ear cress).